A 302-amino-acid polypeptide reads, in one-letter code: Putative S-adenosyl-L-methionine-dependent methyltransferase MUL_2961 (302 aa).

S-adenosyl-L-methionine is bound by residues D128 and 157–158 (DL).

This sequence belongs to the UPF0677 family.

Functionally, exhibits S-adenosyl-L-methionine-dependent methyltransferase activity. The chain is Putative S-adenosyl-L-methionine-dependent methyltransferase MUL_2961 from Mycobacterium ulcerans (strain Agy99).